Here is a 281-residue protein sequence, read N- to C-terminus: 32 kDa heat shock protein (281 aa).

The span at 142 to 168 (EDDEEIDSDEEFGDSDQDEEDSDDEEI) shows a compositional bias: acidic residues. The segment at 142–281 (EDDEEIDSDE…NENNKKKQKN (140 aa)) is disordered. Residues 180–209 (KITEISEVPESKKEKTPEPKKVPEPKKEQV) show a composition bias toward basic and acidic residues. The segment covering 210–273 (KQPTQPQQKK…NNKRPQNQNE (64 aa)) has biased composition (low complexity).

In Dictyostelium discoideum (Social amoeba), this protein is 32 kDa heat shock protein (hspC).